Here is a 140-residue protein sequence, read N- to C-terminus: 3-hydroxyacyl-[acyl-carrier-protein] dehydratase FabZ (140 aa).

The active site involves His-47.

Belongs to the thioester dehydratase family. FabZ subfamily.

The protein localises to the cytoplasm. The enzyme catalyses a (3R)-hydroxyacyl-[ACP] = a (2E)-enoyl-[ACP] + H2O. In terms of biological role, involved in unsaturated fatty acids biosynthesis. Catalyzes the dehydration of short chain beta-hydroxyacyl-ACPs and long chain saturated and unsaturated beta-hydroxyacyl-ACPs. The sequence is that of 3-hydroxyacyl-[acyl-carrier-protein] dehydratase FabZ from Streptococcus uberis (strain ATCC BAA-854 / 0140J).